Reading from the N-terminus, the 625-residue chain is MPSWALFMVTSCLLLALPNQAQVTSQDVFLLALGTEPLNCFSQTFEDLTCFWDEEEAAPSGTYQLLYAYRGEKPRACPLYSQSVPTFGTRYVCQFPAQDEVRLFFPLHLWVKNVSLNQTLIQRVLFVDSVGLPAPPRVIKARGGSQPGELQIHWEAPAPEISDFLRHELRYGPTDSSNATAPSVIQLLSTETCCPTLWMPNPVPVLDQPPCVHPTASQPHGPAPFLTVKGGSCLVSGLQAGKSYWLQLRSQPDGVSLRGSWGPWSFPVTVDLPGDAVTIGLQCFTLDLKMVTCQWQQQDRTSSQGFFRHSRTRCCPTDRDPTWEKCEEEEPRPGSQPALVSRCHFKSRNDSVIHILVEVTTAQGAVHSYLGSPFWIHQAVLLPTPSLHWREVSSGRLELEWQHQSSWAAQETCYQLRYTGEGREDWKVLEPSLGARGGTLELRPRARYSLQLRARLNGPTYQGPWSAWSPPARVSTGSETAWITLVTALLLVLSLSALLGLLLLKWQFPAHYRRLRHALWPSLPDLHRVLGQYLRDTAALSPSKATVTDSCEEVEPSLLEILPKSSESTPLPLCPSQPQMDYRGLQPCLRTMPLSVCPPMAETGSCCTTHIANHSYLPLSYWQQP.

Positions 1-25 are cleaved as a signal peptide; the sequence is MPSWALFMVTSCLLLALPNQAQVTS. Over 26–482 the chain is Extracellular; sequence QDVFLLALGT…RVSTGSETAW (457 aa). N-linked (GlcNAc...) asparagine glycosylation occurs at Asn117. Fibronectin type-III domains lie at 178-270 and 383-479; these read NATA…PVTV and PTPS…TGSE. The short motif at 465 to 469 is the WSXWS motif element; sequence WSAWS. Residues 483–504 traverse the membrane as a helical segment; it reads ITLVTALLLVLSLSALLGLLLL. Residues 505–625 lie on the Cytoplasmic side of the membrane; the sequence is KWQFPAHYRR…YLPLSYWQQP (121 aa). The short motif at 519–527 is the Box 1 motif element; that stretch reads LWPSLPDLH. Glycyl lysine isopeptide (Lys-Gly) (interchain with G-Cter in ubiquitin) cross-links involve residues Lys544 and Lys564. Phosphotyrosine occurs at positions 616 and 621.

This sequence belongs to the type I cytokine receptor family. Type 1 subfamily. As to quaternary structure, homodimer. Interacts with ATXN2L. Interacts with JAK2 and TYK2; these interactions increase MPL localization to the cell membrane. Interacts with THPO. Interacts with SHIP/INPP5D. Interacts with kinases BTK and SYK. Ubiquitination at Lys-544 and Lys-564 targets MPL for degradation by both the lysosomal and proteasomal pathways. The E3 ubiquitin-protein ligase CBL significantly contributes to this ubiquitination.

The protein localises to the cell membrane. It is found in the golgi apparatus. Its subcellular location is the cell surface. Functionally, receptor for thrombopoietin that regulates hematopoietic stem cell renewal, megakaryocyte differentiation, and platelet formation. Upon activation by THPO, induces rapid tyrosine phosphorylation and activation of JAK2, providing docking sites for many signaling proteins such as STAT5, SHIP/INPP5D, GRB2, SOS1 and PI3K. In turn, These signaling cascades lead to the proliferation, survival, and differentiation of megakaryocytes, ultimately leading to increased platelet production. In terms of biological role, acts as an inhibitor of thrombopoietin signaling by promoting protein down-regulation of full-length isoform Mpl-fl. The sequence is that of Thrombopoietin receptor (Mpl) from Mus musculus (Mouse).